The primary structure comprises 432 residues: Competence protein ComFA (432 aa).

The Zn(2+) site is built by Cys-40, Cys-43, Cys-60, and Cys-63. Residues 107–257 (LQAVDKQKPT…RLGELKRLNL (151 aa)) form the Helicase ATP-binding domain. An ATP-binding site is contributed by 120-127 (AVTGAGKT). Residues 205-208 (DEVD) carry the DEAD box motif. In terms of domain architecture, Helicase C-terminal spans 289–432 (KLKSYIEKQR…IQMMNKEAGL (144 aa)).

Belongs to the DEAD box helicase family. Monomer and dimer in solution. Interacts with DprA and ComFC; ComFA-ComFC form rings about 150 Angstroms in diameter with apparent 6-fold symmetry. Zn(2+) serves as cofactor.

The protein localises to the cytoplasm. Functionally, involved in transformation (genetic competence for DNA uptake). DNA uptake is energy dependent, this protein may provide the driving force for DNA uptake. Does not have helicase activity, translocates on single-stranded (ss)DNA in a 5'-3' direction in an ATP-dependent manner, but does not unwind double-stranded (ds)DNA (tested with 5'- and 3'-overhang dsDNA). ATP hydrolysis causes the release of ssDNA from ComFA. A ssDNA-stimulated ATPase; dsDNA does not stimulate ATPase. ATP hydrolysis causes the release of ssDNA from ComFA. ComFC has no effect on ATPase activity. Binds ssDNA but only very poorly to dsDNA in the absence of ATP. Binding to ssDNA does not require free DNA ends. This is Competence protein ComFA from Streptococcus pneumoniae (strain ATCC BAA-255 / R6).